The chain runs to 591 residues: V-type ATP synthase alpha chain (591 aa).

233–240 (GPFGAGKT) contributes to the ATP binding site.

It belongs to the ATPase alpha/beta chains family.

The enzyme catalyses ATP + H2O + 4 H(+)(in) = ADP + phosphate + 5 H(+)(out). Produces ATP from ADP in the presence of a proton gradient across the membrane. The V-type alpha chain is a catalytic subunit. The polypeptide is V-type ATP synthase alpha chain (Streptococcus pneumoniae (strain Hungary19A-6)).